We begin with the raw amino-acid sequence, 463 residues long: Quinolone resistance protein NorB (463 aa).

The next 14 helical transmembrane spans lie at 17-37, 53-73, 86-106, 107-127, 142-162, 165-185, 201-221, 230-250, 273-293, 299-319, 334-354, 357-377, 403-423, and 435-455; these read IGIV…VNVV, IAVS…GGLA, IILN…LLLI, IGRL…LSII, YWSI…GAVA, LGWR…LFLI, FDIK…ILIT, SLLF…FIVL, TASN…NTFV, YSSL…LIMI, PMLI…LTFL, ILYV…LGIY, MASA…YAIV, and IALW…LLLV.

This sequence belongs to the major facilitator superfamily. TCR/Tet family.

The protein resides in the cell membrane. Multidrug efflux pump that acts independently of NorA and is one of the factors that confers resistance against diverse quinolones and chemical compounds. This Staphylococcus aureus (strain MSSA476) protein is Quinolone resistance protein NorB (norB).